Reading from the N-terminus, the 233-residue chain is MMPRLQQHKIILRQLGLQPYAPVSQAMHNFTEFRTDTTPDEIWLVEHQHVFTQGQAGKAEHVLMPGDIPVIQSDRGGQVTYHGPGQQVMYVMVDLKRAKIGVRQLVTAIENTVIETLAHFNIDSHARPDAPGVYVEQQKICSLGLRIRRGCSFHGLALNIAMDLEPFQRINPCGYAGMQMTQVSALQPGVTVADVQPVLVREFTRQLGYPTAKLQPWSLSDYLLSSHSSSSVL.

The 176-residue stretch at aspartate 36 to threonine 211 folds into the BPL/LPL catalytic domain. Substrate contacts are provided by residues arginine 75–histidine 82, serine 142–glycine 144, and glycine 155–alanine 157. Cysteine 173 functions as the Acyl-thioester intermediate in the catalytic mechanism.

This sequence belongs to the LipB family.

The protein localises to the cytoplasm. It catalyses the reaction octanoyl-[ACP] + L-lysyl-[protein] = N(6)-octanoyl-L-lysyl-[protein] + holo-[ACP] + H(+). The protein operates within protein modification; protein lipoylation via endogenous pathway; protein N(6)-(lipoyl)lysine from octanoyl-[acyl-carrier-protein]: step 1/2. Functionally, catalyzes the transfer of endogenously produced octanoic acid from octanoyl-acyl-carrier-protein onto the lipoyl domains of lipoate-dependent enzymes. Lipoyl-ACP can also act as a substrate although octanoyl-ACP is likely to be the physiological substrate. This is Octanoyltransferase from Yersinia pestis bv. Antiqua (strain Antiqua).